Here is a 226-residue protein sequence, read N- to C-terminus: Cytidylate kinase (226 aa).

Residue 10–18 (GPASSGKST) coordinates ATP.

This sequence belongs to the cytidylate kinase family. Type 1 subfamily.

It is found in the cytoplasm. It carries out the reaction CMP + ATP = CDP + ADP. The catalysed reaction is dCMP + ATP = dCDP + ADP. This Streptococcus uberis (strain ATCC BAA-854 / 0140J) protein is Cytidylate kinase.